A 365-amino-acid chain; its full sequence is 4-hydroxy-3-methylbut-2-en-1-yl diphosphate synthase (flavodoxin) (365 aa).

Residues Cys-270, Cys-273, Cys-305, and Glu-312 each coordinate [4Fe-4S] cluster.

It belongs to the IspG family. The cofactor is [4Fe-4S] cluster.

It catalyses the reaction (2E)-4-hydroxy-3-methylbut-2-enyl diphosphate + 2 oxidized [2Fe-2S]-[ferredoxin] + H2O = 2-C-methyl-D-erythritol 2,4-cyclic diphosphate + 2 reduced [2Fe-2S]-[ferredoxin] + H(+). The catalysed reaction is (2E)-4-hydroxy-3-methylbut-2-enyl diphosphate + oxidized [flavodoxin] + H2O + 2 H(+) = 2-C-methyl-D-erythritol 2,4-cyclic diphosphate + reduced [flavodoxin]. Its pathway is isoprenoid biosynthesis; isopentenyl diphosphate biosynthesis via DXP pathway; isopentenyl diphosphate from 1-deoxy-D-xylulose 5-phosphate: step 5/6. Its function is as follows. Converts 2C-methyl-D-erythritol 2,4-cyclodiphosphate (ME-2,4cPP) into 1-hydroxy-2-methyl-2-(E)-butenyl 4-diphosphate. Involved in density-dependent regulation of 2'-N-acetyltransferase. This is 4-hydroxy-3-methylbut-2-en-1-yl diphosphate synthase (flavodoxin) from Providencia stuartii.